Consider the following 253-residue polypeptide: Ribosome-inactivating protein saporin-5 (253 aa).

Glu176 is an active-site residue.

The protein belongs to the ribosome-inactivating protein family. Type 1 RIP subfamily.

It catalyses the reaction Endohydrolysis of the N-glycosidic bond at one specific adenosine on the 28S rRNA.. Functionally, ribosome-inactivating protein of type 1, inhibits protein synthesis in animal cells. The polypeptide is Ribosome-inactivating protein saporin-5 (SAP5) (Saponaria officinalis (Common soapwort)).